Reading from the N-terminus, the 246-residue chain is 3-deoxy-manno-octulosonate cytidylyltransferase (246 aa).

Belongs to the KdsB family.

Its subcellular location is the cytoplasm. The enzyme catalyses 3-deoxy-alpha-D-manno-oct-2-ulosonate + CTP = CMP-3-deoxy-beta-D-manno-octulosonate + diphosphate. The protein operates within nucleotide-sugar biosynthesis; CMP-3-deoxy-D-manno-octulosonate biosynthesis; CMP-3-deoxy-D-manno-octulosonate from 3-deoxy-D-manno-octulosonate and CTP: step 1/1. It functions in the pathway bacterial outer membrane biogenesis; lipopolysaccharide biosynthesis. Its function is as follows. Activates KDO (a required 8-carbon sugar) for incorporation into bacterial lipopolysaccharide in Gram-negative bacteria. The chain is 3-deoxy-manno-octulosonate cytidylyltransferase from Rickettsia africae (strain ESF-5).